A 122-amino-acid chain; its full sequence is Large ribosomal subunit protein uL18 (122 aa).

A disordered region spans residues 1–25; it reads MSTLSRKQQTQKRHRRLRRHLSGTA. Basic residues predominate over residues 9–21; sequence QTQKRHRRLRRHL.

Belongs to the universal ribosomal protein uL18 family. In terms of assembly, part of the 50S ribosomal subunit; part of the 5S rRNA/L5/L18/L25 subcomplex. Contacts the 5S and 23S rRNAs.

In terms of biological role, this is one of the proteins that bind and probably mediate the attachment of the 5S RNA into the large ribosomal subunit, where it forms part of the central protuberance. In Synechococcus sp. (strain CC9311), this protein is Large ribosomal subunit protein uL18.